Here is a 277-residue protein sequence, read N- to C-terminus: Pantothenate synthetase (277 aa).

26–33 (MGNLHAGH) serves as a coordination point for ATP. Histidine 33 acts as the Proton donor in catalysis. Glutamine 57 contacts (R)-pantoate. Glutamine 57 is a beta-alanine binding site. An ATP-binding site is contributed by 143-146 (GEKD). Glutamine 149 lines the (R)-pantoate pocket. ATP is bound by residues valine 172 and 180–183 (LSSR).

It belongs to the pantothenate synthetase family. In terms of assembly, homodimer.

Its subcellular location is the cytoplasm. It carries out the reaction (R)-pantoate + beta-alanine + ATP = (R)-pantothenate + AMP + diphosphate + H(+). The protein operates within cofactor biosynthesis; (R)-pantothenate biosynthesis; (R)-pantothenate from (R)-pantoate and beta-alanine: step 1/1. Its function is as follows. Catalyzes the condensation of pantoate with beta-alanine in an ATP-dependent reaction via a pantoyl-adenylate intermediate. This chain is Pantothenate synthetase, found in Nitrosomonas europaea (strain ATCC 19718 / CIP 103999 / KCTC 2705 / NBRC 14298).